Consider the following 337-residue polypeptide: Fructose-1,6-bisphosphatase class 1 (337 aa).

Mg(2+) contacts are provided by E91, D113, L115, and D116. Substrate contacts are provided by residues 116–119 (DGSS), N209, Y242, and K275. Residue E281 coordinates Mg(2+).

It belongs to the FBPase class 1 family. As to quaternary structure, homotetramer. Mg(2+) serves as cofactor.

The protein resides in the cytoplasm. The catalysed reaction is beta-D-fructose 1,6-bisphosphate + H2O = beta-D-fructose 6-phosphate + phosphate. It participates in carbohydrate biosynthesis; gluconeogenesis. The chain is Fructose-1,6-bisphosphatase class 1 from Nitratidesulfovibrio vulgaris (strain DP4) (Desulfovibrio vulgaris).